Consider the following 878-residue polypeptide: Alanine--tRNA ligase (878 aa).

Positions 562, 566, 670, and 674 each coordinate Zn(2+).

It belongs to the class-II aminoacyl-tRNA synthetase family. Zn(2+) serves as cofactor.

It is found in the cytoplasm. It carries out the reaction tRNA(Ala) + L-alanine + ATP = L-alanyl-tRNA(Ala) + AMP + diphosphate. Its function is as follows. Catalyzes the attachment of alanine to tRNA(Ala) in a two-step reaction: alanine is first activated by ATP to form Ala-AMP and then transferred to the acceptor end of tRNA(Ala). Also edits incorrectly charged Ser-tRNA(Ala) and Gly-tRNA(Ala) via its editing domain. In Acinetobacter baylyi (strain ATCC 33305 / BD413 / ADP1), this protein is Alanine--tRNA ligase.